A 151-amino-acid chain; its full sequence is Ribosome maturation factor RimP (151 aa).

The protein belongs to the RimP family.

It localises to the cytoplasm. Functionally, required for maturation of 30S ribosomal subunits. The sequence is that of Ribosome maturation factor RimP from Shewanella denitrificans (strain OS217 / ATCC BAA-1090 / DSM 15013).